The sequence spans 406 residues: Phosphopentomutase (406 aa).

Mn(2+)-binding residues include Asp-10, Asp-305, His-310, Asp-346, His-347, and His-358.

Belongs to the phosphopentomutase family. It depends on Mn(2+) as a cofactor.

The protein localises to the cytoplasm. The catalysed reaction is 2-deoxy-alpha-D-ribose 1-phosphate = 2-deoxy-D-ribose 5-phosphate. The enzyme catalyses alpha-D-ribose 1-phosphate = D-ribose 5-phosphate. It participates in carbohydrate degradation; 2-deoxy-D-ribose 1-phosphate degradation; D-glyceraldehyde 3-phosphate and acetaldehyde from 2-deoxy-alpha-D-ribose 1-phosphate: step 1/2. Its function is as follows. Isomerase that catalyzes the conversion of deoxy-ribose 1-phosphate (dRib-1-P) and ribose 1-phosphate (Rib-1-P) to deoxy-ribose 5-phosphate (dRib-5-P) and ribose 5-phosphate (Rib-5-P), respectively. The chain is Phosphopentomutase from Rhizobium leguminosarum bv. trifolii (strain WSM2304).